The primary structure comprises 252 residues: DNA repair protein RecO (252 aa).

This sequence belongs to the RecO family.

Involved in DNA repair and RecF pathway recombination. The protein is DNA repair protein RecO of Rhodospirillum rubrum (strain ATCC 11170 / ATH 1.1.1 / DSM 467 / LMG 4362 / NCIMB 8255 / S1).